A 760-amino-acid chain; its full sequence is Histone-lysine N-methyltransferase EZH2 (760 aa).

Disordered stretches follow at residues 208-231 and 356-444; these read KDDA…SKKF and PERA…PENV. Positions 361-373 are enriched in basic residues; that stretch reads TPSKRSTGRRRGR. Polar residues predominate over residues 375-388; the sequence is PNSNSRPSTPTVNS. Positions 389-400 are enriched in basic and acidic residues; it reads ETKDTDSDREGG. The CXC domain maps to 517 to 619; the sequence is CRKIQLKKDG…SKNVSCKNCS (103 aa). Residues 626-741 form the SET domain; it reads KHLLLAPSDV…TGEELFFDYR (116 aa).

It belongs to the class V-like SAM-binding methyltransferase superfamily. Histone-lysine methyltransferase family. EZ subfamily. In terms of assembly, component of the prc2/eed-ezh2 complex.

It localises to the nucleus. The enzyme catalyses L-lysyl(27)-[histone H3] + 3 S-adenosyl-L-methionine = N(6),N(6),N(6)-trimethyl-L-lysyl(27)-[histone H3] + 3 S-adenosyl-L-homocysteine + 3 H(+). In terms of biological role, polycomb group (PcG) protein. Catalytic subunit of the prc2/eed-ezh2 complex, which methylates 'Lys-9' and 'Lys-27' of histone H3, leading to transcriptional repression of the affected target gene. May regulate the circadian clock via histone methylation at the promoter of the circadian genes. This Danio rerio (Zebrafish) protein is Histone-lysine N-methyltransferase EZH2 (ezh2).